Here is a 524-residue protein sequence, read N- to C-terminus: Dihydromonacolin L monooxygenase mokC (524 aa).

The Cytoplasmic portion of the chain corresponds to 1–25 (MTVPTDTVSRRLQSLAWSDIKQHAP). The helical; Signal-anchor for type II membrane protein transmembrane segment at 26 to 47 (WLPSSRTLVSGFLCLILLQILY) threads the bilayer. The Lumenal portion of the chain corresponds to 48–524 (SRGRKSDLRV…LMMRRRDEDL (477 aa)). Asn-396 and Asn-401 each carry an N-linked (GlcNAc...) asparagine glycan. A heme-binding site is contributed by Cys-467.

It belongs to the cytochrome P450 family. Heme is required as a cofactor.

Its subcellular location is the endoplasmic reticulum membrane. The catalysed reaction is dihydromonacolin L carboxylate + reduced [NADPH--hemoprotein reductase] + O2 = monacolin L carboxylate + oxidized [NADPH--hemoprotein reductase] + 2 H2O + H(+). The enzyme catalyses monacolin L carboxylate + reduced [NADPH--hemoprotein reductase] + O2 = monacolin J carboxylate + oxidized [NADPH--hemoprotein reductase] + H2O + H(+). The protein operates within polyketide biosynthesis; lovastatin biosynthesis. Cytochrome P450 monooxygenase; part of the gene cluster that mediates the biosynthesis of monakolin K, also known as lovastatin, and which acts as a potent competitive inhibitor of HMG-CoA reductase. Monakolin K biosynthesis is performed in two stages. The first stage is catalyzed by the nonaketide synthase mokA, which belongs to type I polyketide synthases and catalyzes the iterative nine-step formation of the polyketide. This PKS stage is completed by the action of dehydrogenase mokE, which catalyzes the NADPH-dependent reduction of the unsaturated tetra-, penta- and heptaketide intermediates that arise during the mokA-mediated biosynthesis of the nonaketide chain and leads to dihydromonacolin L. Covalently bound dihydromonacolin L is released from mokA by the mokD esterase. Conversion of dihydromonacolin L into monacolin L and then monacolin J is subsequently performed with the participation of molecular oxygen and P450 monoogygenase mokC. Finally, mokF performs the conversion of monacoline J to monacoline K through the addition of the side-chain diketide moiety (2R)-2-methylbutanoate produced by the diketide synthase mokB. In Monascus pilosus (Red mold), this protein is Dihydromonacolin L monooxygenase mokC.